The primary structure comprises 187 residues: MTTAQKVQPRLKERYRSEIRDALRKQFGYGNVMQIPTVTKVVVNMGVGEAARDAKLINGAVNDLALITGQKPEVRRARKSIAQFKLREGMPVGVRVTLRGDRMWEFLDRLTSIALPRIRDFRGLSPKQFDGVGSYTFGLAEQAVFHEVDVDKIDRVRGMDINVVTSAATDDEGRALLRALGFPFKEN.

Belongs to the universal ribosomal protein uL5 family. Part of the 50S ribosomal subunit; part of the 5S rRNA/L5/L18/L25 subcomplex. Contacts the 5S rRNA and the P site tRNA. Forms a bridge to the 30S subunit in the 70S ribosome.

Functionally, this is one of the proteins that bind and probably mediate the attachment of the 5S RNA into the large ribosomal subunit, where it forms part of the central protuberance. In the 70S ribosome it contacts protein S13 of the 30S subunit (bridge B1b), connecting the 2 subunits; this bridge is implicated in subunit movement. Contacts the P site tRNA; the 5S rRNA and some of its associated proteins might help stabilize positioning of ribosome-bound tRNAs. The polypeptide is Large ribosomal subunit protein uL5 (Mycobacterium bovis (strain BCG / Tokyo 172 / ATCC 35737 / TMC 1019)).